The primary structure comprises 466 residues: 3-isopropylmalate dehydratase large subunit (466 aa).

Residues Cys347, Cys407, and Cys410 each contribute to the [4Fe-4S] cluster site.

Belongs to the aconitase/IPM isomerase family. LeuC type 1 subfamily. As to quaternary structure, heterodimer of LeuC and LeuD. It depends on [4Fe-4S] cluster as a cofactor.

It carries out the reaction (2R,3S)-3-isopropylmalate = (2S)-2-isopropylmalate. It participates in amino-acid biosynthesis; L-leucine biosynthesis; L-leucine from 3-methyl-2-oxobutanoate: step 2/4. Its function is as follows. Catalyzes the isomerization between 2-isopropylmalate and 3-isopropylmalate, via the formation of 2-isopropylmaleate. The polypeptide is 3-isopropylmalate dehydratase large subunit (Shigella boydii serotype 4 (strain Sb227)).